Reading from the N-terminus, the 133-residue chain is Small ribosomal subunit protein bS6 (133 aa).

The segment covering 106–125 (REERVERAPRAPRPEVKAEP) has biased composition (basic and acidic residues). The tract at residues 106–133 (REERVERAPRAPRPEVKAEPEAEATAEA) is disordered.

Belongs to the bacterial ribosomal protein bS6 family.

Its function is as follows. Binds together with bS18 to 16S ribosomal RNA. This chain is Small ribosomal subunit protein bS6, found in Psychromonas ingrahamii (strain DSM 17664 / CCUG 51855 / 37).